The chain runs to 603 residues: Dual specificity protein phosphatase CDC14A (603 aa).

The interval 7–162 (ELIGACEFMK…GLQHGFFDFE (156 aa)) is a. The interval 163-176 (TFDAEEYEHYERVE) is linker. The interval 177–343 (NGDFNWIVPG…QGDIFRSKLK (167 aa)) is b. The Tyrosine-protein phosphatase domain occupies 179-336 (DFNWIVPGKF…KQASLWVQGD (158 aa)). Cys278 acts as the Phosphocysteine intermediate in catalysis. The residue at position 484 (Ser484) is a Phosphoserine. The span at 518-538 (NGSTQTPGRNYPELNNNQYTR) shows a compositional bias: polar residues. Positions 518–583 (NGSTQTPGRN…RPSFPGSLSS (66 aa)) are disordered. 2 stretches are compositionally biased toward low complexity: residues 539-558 (SSNSNSSSSSSGLGGNLNSS) and 573-583 (LRPSFPGSLSS). A Phosphoserine modification is found at Ser592.

This sequence belongs to the protein-tyrosine phosphatase family. Non-receptor class CDC14 subfamily. In terms of assembly, interacts with KIF20A. Interaction is required to localize CDC14 to the midzone of the mitotic spindle. Expressed in the inner ear.

The protein resides in the nucleus. The protein localises to the cytoplasm. It is found in the cytoskeleton. It localises to the microtubule organizing center. Its subcellular location is the centrosome. The protein resides in the spindle. The protein localises to the cell projection. It is found in the kinocilium. It localises to the spindle pole. Its subcellular location is the stereocilium. The enzyme catalyses O-phospho-L-tyrosyl-[protein] + H2O = L-tyrosyl-[protein] + phosphate. It carries out the reaction O-phospho-L-seryl-[protein] + H2O = L-seryl-[protein] + phosphate. The catalysed reaction is O-phospho-L-threonyl-[protein] + H2O = L-threonyl-[protein] + phosphate. Its function is as follows. Dual-specificity phosphatase. Required for centrosome separation and productive cytokinesis during cell division. Dephosphorylates SIRT2 around early anaphase. May dephosphorylate the APC subunit FZR1/CDH1, thereby promoting APC-FZR1 dependent degradation of mitotic cyclins and subsequent exit from mitosis. Required for normal hearing. The chain is Dual specificity protein phosphatase CDC14A (Cdc14a) from Mus musculus (Mouse).